The following is a 232-amino-acid chain: Uracil phosphoribosyltransferase (232 aa).

Residue 38–42 (KGLVK) participates in GTP binding. Residues R87, R112, and 140–148 (DPMIATGST) each bind 5-phospho-alpha-D-ribose 1-diphosphate. Uracil contacts are provided by residues I204 and 209–211 (GDA). 5-phospho-alpha-D-ribose 1-diphosphate is bound at residue D210.

Belongs to the UPRTase family. It depends on Mg(2+) as a cofactor.

The enzyme catalyses UMP + diphosphate = 5-phospho-alpha-D-ribose 1-diphosphate + uracil. It functions in the pathway pyrimidine metabolism; UMP biosynthesis via salvage pathway; UMP from uracil: step 1/1. Allosterically activated by GTP. Functionally, catalyzes the conversion of uracil and 5-phospho-alpha-D-ribose 1-diphosphate (PRPP) to UMP and diphosphate. The sequence is that of Uracil phosphoribosyltransferase from Pyrococcus furiosus (strain ATCC 43587 / DSM 3638 / JCM 8422 / Vc1).